Here is a 471-residue protein sequence, read N- to C-terminus: Proton-coupled amino acid transporter-like protein pathetic (471 aa).

N-linked (GlcNAc...) asparagine glycosylation is present at N61. 10 helical membrane-spanning segments follow: residues 81–101, 153–173, 187–207, 216–236, 253–273, 283–303, 337–357, 375–395, 397–417, and 432–452; these read FAFMCSGLIMGIFSTIFTAFI, ILFGLFLTYFGTCSVYTVIVA, AVSLRMLICIMLVPLILIAWV, VSMVANVFMGLGLGITFYYLV, LPQFFSITIFAMEAIGVVMPL, FLGICGVLSQGMSGVTLIYML, LISLAVYCTFGLQFFVCLEII, VLRTVLVTAAVVLAVAVPTIG, FMGLIGAFCFSILGLIFPVVI, and WILWKNAIITLCGIGALVFGT.

The protein belongs to the amino acid/polyamine transporter 2 family. In third instar larvae, expressed at highest levels in the brain and digestive system with particularly high levels in surface glia of the brain (at protein level). In third instar larvae, expressed in all cells of the body wall (at protein level). Within the body wall of third instar larvae, most highly expressed in epithelial cells and sensory neurons. Expressed at a similar level in all da neurons (at protein level). Widely expressed during embryonic and late larval stages. Levels are highly dynamic in embryogenesis with surges of expression in many structures, including muscle primordia, salivary glands, proventriculus, trachea and gonads. Expressed in all or most cells of larval imaginal disks. Expression is also particularly strong in the pouch and hinge regions of the wing disk and in the morphogenetic furrow of the eye disk.

It is found in the cell membrane. Its subcellular location is the lysosome membrane. The protein resides in the late endosome membrane. It localises to the cell projection. The protein localises to the axon. It is found in the dendrite. Its subcellular location is the perikaryon. The protein resides in the cytoplasm. Amino acid transporter which has pH-dependent electrogenic transport activity for alanine and glycine but not for proline. Plays a role in positive regulation of growth by directly or indirectly modulating the effects of the TOR signaling pathway. Required in a cell-autonomous manner for dendrite growth in neurons with large dendrite arbors. This chain is Proton-coupled amino acid transporter-like protein pathetic, found in Drosophila melanogaster (Fruit fly).